Here is a 333-residue protein sequence, read N- to C-terminus: MQSSVNEFLTPRHIDVQVVSPTRAKITLEPLERGFGHTLGNALRRILLSSMPGCAVVEAEIDGVLHEYSAIEGVQEDVIEILLNLKGIAIKLHGRDEVTLSLVKKGAGAVTAADIQLDHDVEIVNGDHLIANLAANGSLNMKLKVARGRGYEPADARQSDEDESRSIGRLQLDATFSPVRRVAYVVENARVEQRTNLDKLVIDLETNGTLDPEEAIRRAATILQQQLAAFVDLKGDSEPVVVEQEDEIDPILLRPVDDLELTVRSANCLKAENIYYIGDLIQRTEVELLKTPNLGKKSLTEIKDVLASRGLSLGMRLDNWPPASLKKDDKATA.

The alpha N-terminal domain (alpha-NTD) stretch occupies residues 1–234 (MQSSVNEFLT…QQLAAFVDLK (234 aa)). The segment at 248-333 (IDPILLRPVD…SLKKDDKATA (86 aa)) is alpha C-terminal domain (alpha-CTD).

The protein belongs to the RNA polymerase alpha chain family. In terms of assembly, homodimer. The RNAP catalytic core consists of 2 alpha, 1 beta, 1 beta' and 1 omega subunit. When a sigma factor is associated with the core the holoenzyme is formed, which can initiate transcription.

The catalysed reaction is RNA(n) + a ribonucleoside 5'-triphosphate = RNA(n+1) + diphosphate. DNA-dependent RNA polymerase catalyzes the transcription of DNA into RNA using the four ribonucleoside triphosphates as substrates. This chain is DNA-directed RNA polymerase subunit alpha, found in Stutzerimonas stutzeri (strain A1501) (Pseudomonas stutzeri).